We begin with the raw amino-acid sequence, 430 residues long: MALLHSARVLSGVASAFHPGLAAAASARASSWWAHVEMGPPDPILGVTEAYKRDTNSKKMNLGVGAYRDDNGKPYVLPSVRKAEAQIAAKGLDKEYLPIGGLAEFCRASAELALGENSEVVKSGRFVTVQTISGTGALRIGASFLQRFFKFSRDVFLPKPSWGNHTPIFRDAGMQLQSYRYYDPKTCGFDFTGALEDISKIPEQSVLLLHACAHNPTGVDPRPEQWKEIATVVKKRNLFAFFDMAYQGFASGDGDKDAWAVRHFIEQGINVCLCQSYAKNMGLYGERVGAFTVICKDADEAKRVESQLKILIRPMYSNPPIHGARIASTILTSPDLRKQWLQEVKGMADRIIGMRTQLVSNLKKEGSTHSWQHITDQIGMFCFTGLKPEQVERLTKEFSIYMTKDGRISVAGVTSGNVGYLAHAIHQVTK.

The transit peptide at 1 to 29 (MALLHSARVLSGVASAFHPGLAAAASARA) directs the protein to the mitochondrion. Threonine 48 is modified (phosphothreonine). Lysine 59 is subject to N6-acetyllysine. Glycine 65 serves as a coordination point for substrate. N6-acetyllysine; alternate is present on lysine 73. An N6-succinyllysine; alternate modification is found at lysine 73. Lysine 82 bears the N6-acetyllysine mark. Lysine 90 bears the N6-acetyllysine; alternate mark. Residue lysine 90 is modified to N6-succinyllysine; alternate. Tyrosine 96 carries the 3'-nitrotyrosine; alternate modification. A Phosphotyrosine; alternate modification is found at tyrosine 96. At lysine 122 the chain carries N6-acetyllysine; alternate. Lysine 122 carries the post-translational modification N6-succinyllysine; alternate. A Phosphoserine modification is found at serine 143. Lysine 159 is modified (N6-acetyllysine; alternate). Lysine 159 is subject to N6-succinyllysine; alternate. Tryptophan 162 contributes to the substrate binding site. At lysine 185 the chain carries N6-acetyllysine; alternate. At lysine 185 the chain carries N6-succinyllysine; alternate. Asparagine 215 provides a ligand contact to substrate. An N6-succinyllysine modification is found at lysine 227. Lysine 234 is modified (N6-acetyllysine). An N6-acetyllysine; alternate mark is found at lysine 279 and lysine 296. Lysine 279 is subject to N6-(pyridoxal phosphate)lysine; alternate. Lysine 296 carries the post-translational modification N6-succinyllysine; alternate. At lysine 302 the chain carries N6-acetyllysine. N6-acetyllysine; alternate is present on lysine 309. An N6-succinyllysine; alternate modification is found at lysine 309. The residue at position 313 (arginine 313) is an Asymmetric dimethylarginine. Lysine 338 is modified (N6-acetyllysine; alternate). Lysine 338 bears the N6-succinyllysine; alternate mark. The residue at position 345 (lysine 345) is an N6-acetyllysine. Lysine 363 is modified (N6-acetyllysine; alternate). The residue at position 363 (lysine 363) is an N6-succinyllysine; alternate. An N6-acetyllysine mark is found at lysine 364 and lysine 387. N6-acetyllysine; alternate occurs at positions 396 and 404. Lysine 396 and lysine 404 each carry N6-succinyllysine; alternate. Arginine 407 provides a ligand contact to substrate.

Belongs to the class-I pyridoxal-phosphate-dependent aminotransferase family. As to quaternary structure, homodimer. Pyridoxal 5'-phosphate is required as a cofactor.

The protein localises to the mitochondrion matrix. It localises to the cell membrane. The catalysed reaction is L-aspartate + 2-oxoglutarate = oxaloacetate + L-glutamate. It catalyses the reaction L-kynurenine + 2-oxoglutarate = kynurenate + L-glutamate + H2O. Catalyzes the irreversible transamination of the L-tryptophan metabolite L-kynurenine to form kynurenic acid (KA). As a member of the malate-aspartate shuttle, it has a key role in the intracellular NAD(H) redox balance. Is important for metabolite exchange between mitochondria and cytosol, and for amino acid metabolism. Facilitates cellular uptake of long-chain free fatty acids. This Oryctolagus cuniculus (Rabbit) protein is Aspartate aminotransferase, mitochondrial (GOT2).